The following is a 406-amino-acid chain: Homocysteine-responsive endoplasmic reticulum-resident ubiquitin-like domain member 2 protein (406 aa).

Residues 10–89 (VTLIIKAPNQ…HMVHLVCTSR (80 aa)) enclose the Ubiquitin-like domain. Residues 86–156 (CTSRTPPSSP…PQAQTDPAQS (71 aa)) are disordered. Composition is skewed to low complexity over residues 87–98 (TSRTPPSSPKSS) and 109–139 (SNSN…SSSE). A compositionally biased stretch (polar residues) spans 145–156 (TLPQAQTDPAQS). The chain crosses the membrane as a helical span at residues 302–322 (FIMVMGAMLLVYLHQAGWFPF).

It localises to the membrane. Its function is as follows. Could be involved in the unfolded protein response (UPR) pathway. The polypeptide is Homocysteine-responsive endoplasmic reticulum-resident ubiquitin-like domain member 2 protein (HERPUD2) (Bos taurus (Bovine)).